Consider the following 299-residue polypeptide: 4-diphosphocytidyl-2-C-methyl-D-erythritol kinase (299 aa).

Residue lysine 11 is part of the active site. 94–104 (PQGGGLGGGSS) is a binding site for ATP. Residue aspartate 136 is part of the active site.

Belongs to the GHMP kinase family. IspE subfamily.

It carries out the reaction 4-CDP-2-C-methyl-D-erythritol + ATP = 4-CDP-2-C-methyl-D-erythritol 2-phosphate + ADP + H(+). The protein operates within isoprenoid biosynthesis; isopentenyl diphosphate biosynthesis via DXP pathway; isopentenyl diphosphate from 1-deoxy-D-xylulose 5-phosphate: step 3/6. Functionally, catalyzes the phosphorylation of the position 2 hydroxy group of 4-diphosphocytidyl-2C-methyl-D-erythritol. The protein is 4-diphosphocytidyl-2-C-methyl-D-erythritol kinase of Bordetella pertussis (strain Tohama I / ATCC BAA-589 / NCTC 13251).